A 447-amino-acid chain; its full sequence is Adenylosuccinate synthetase (447 aa).

Residues 12–18 (GDEGKGK) and 40–42 (GHT) each bind GTP. Aspartate 13 functions as the Proton acceptor in the catalytic mechanism. 2 residues coordinate Mg(2+): aspartate 13 and glycine 40. Residues 13–16 (DEGK), 38–41 (NAGH), threonine 128, arginine 142, glutamine 223, threonine 238, and arginine 302 each bind IMP. Histidine 41 (proton donor) is an active-site residue. 298–304 (TTTGRKR) contacts substrate. Residues arginine 304, 330–332 (KLD), and 412–414 (SLG) contribute to the GTP site.

Belongs to the adenylosuccinate synthetase family. As to quaternary structure, homodimer. Requires Mg(2+) as cofactor.

Its subcellular location is the cytoplasm. It catalyses the reaction IMP + L-aspartate + GTP = N(6)-(1,2-dicarboxyethyl)-AMP + GDP + phosphate + 2 H(+). Its pathway is purine metabolism; AMP biosynthesis via de novo pathway; AMP from IMP: step 1/2. Functionally, plays an important role in the de novo pathway of purine nucleotide biosynthesis. Catalyzes the first committed step in the biosynthesis of AMP from IMP. The protein is Adenylosuccinate synthetase of Nostoc punctiforme (strain ATCC 29133 / PCC 73102).